The primary structure comprises 72 residues: Translation initiation factor IF-1 (72 aa).

Residues 1–72 (MSKDDCIEFE…TKGRIIYRMK (72 aa)) enclose the S1-like domain.

The protein belongs to the IF-1 family. In terms of assembly, component of the 30S ribosomal translation pre-initiation complex which assembles on the 30S ribosome in the order IF-2 and IF-3, IF-1 and N-formylmethionyl-tRNA(fMet); mRNA recruitment can occur at any time during PIC assembly.

The protein localises to the cytoplasm. Functionally, one of the essential components for the initiation of protein synthesis. Stabilizes the binding of IF-2 and IF-3 on the 30S subunit to which N-formylmethionyl-tRNA(fMet) subsequently binds. Helps modulate mRNA selection, yielding the 30S pre-initiation complex (PIC). Upon addition of the 50S ribosomal subunit IF-1, IF-2 and IF-3 are released leaving the mature 70S translation initiation complex. The polypeptide is Translation initiation factor IF-1 (Xylella fastidiosa (strain 9a5c)).